An 862-amino-acid polypeptide reads, in one-letter code: Kinesin-like protein KIN-7J (862 aa).

In terms of domain architecture, Kinesin motor spans 9–331; the sequence is RIVVSVRLRP…LLFANCAKDV (323 aa). 95-102 lines the ATP pocket; sequence GQTSSGKT. Positions 340–415 form a coiled coil; it reads VMSDKALVKH…NFRKVASDGD (76 aa). Basic and acidic residues-rich tracts occupy residues 475-499 and 518-531; these read EEHE…KEVQ and PEKK…KHSE. 2 disordered regions span residues 475 to 532 and 596 to 643; these read EEHE…HSES and DDSA…STCN. The span at 598-610 shows a compositional bias: polar residues; that stretch reads SASTTPSSETFRY. Over residues 613 to 629 the composition is skewed to basic and acidic residues; that stretch reads RRPEKVRKSLSPDEIAD.

The protein belongs to the TRAFAC class myosin-kinesin ATPase superfamily. Kinesin family. KIN-7 subfamily.

This is Kinesin-like protein KIN-7J from Oryza sativa subsp. japonica (Rice).